The chain runs to 269 residues: Probable ribosomal RNA small subunit methyltransferase A (269 aa).

The S-adenosyl-L-methionine site is built by His23, Leu25, Gly50, Glu71, Asp95, and Asn110.

It belongs to the class I-like SAM-binding methyltransferase superfamily. rRNA adenine N(6)-methyltransferase family. RsmA subfamily.

It localises to the cytoplasm. Functionally, specifically dimethylates two adjacent adenosines in the loop of a conserved hairpin near the 3'-end of 16S rRNA in the 30S particle. May play a critical role in biogenesis of 30S subunits. This is Probable ribosomal RNA small subunit methyltransferase A from Pyrococcus abyssi (strain GE5 / Orsay).